We begin with the raw amino-acid sequence, 120 residues long: uncharacterized protein (120 aa).

The N-terminal stretch at 1 to 22 is a signal peptide; that stretch reads MSTSGMLFIFATFCPCFLSCCA. The Extracellular segment spans residues 23–59; the sequence is FMSHWKLKDFSFRFLRMCGERSLVVCYPLKLLKQIRS. The helical transmembrane segment at 60–80 threads the bilayer; that stretch reads LFSIAIGHLSLMLIEGSANLL. The Cytoplasmic portion of the chain corresponds to 81–120; the sequence is SLEEISRTLLRILDFVGNKNMRTYLEVPLCRWHISQARPN.

It localises to the membrane. This is an uncharacterized protein from Schizosaccharomyces pombe (strain 972 / ATCC 24843) (Fission yeast).